Consider the following 218-residue polypeptide: ATP synthase subunit a (218 aa).

The next 5 helical transmembrane spans lie at 17–37 (IYSTVVNTWIIMILLLAGIFL), 75–95 (YLPLVATLFIFILSLNLSWFI), 104–124 (DLSTTAAFAVTTIILVQIFGI), 162–184 (LFGNLFGEEMVVTILFLMIPFLL), and 196–216 (GTIQAFVFTLLTITYIANFVH).

Belongs to the ATPase A chain family. In terms of assembly, F-type ATPases have 2 components, CF(1) - the catalytic core - and CF(0) - the membrane proton channel. CF(1) has five subunits: alpha(3), beta(3), gamma(1), delta(1), epsilon(1). CF(0) has three main subunits: a(1), b(2) and c(9-12). The alpha and beta chains form an alternating ring which encloses part of the gamma chain. CF(1) is attached to CF(0) by a central stalk formed by the gamma and epsilon chains, while a peripheral stalk is formed by the delta and b chains. In this bacterium the a and b subunits are transcribed but do not seem to be translated, thus the ATP synthase consists of the alpha, beta, gamma, delta, epsilon and c subunits.

It is found in the cell membrane. In terms of biological role, key component of the proton channel; it plays a direct role in the translocation of protons across the membrane. This Moorella thermoacetica (strain ATCC 39073 / JCM 9320) protein is ATP synthase subunit a.